We begin with the raw amino-acid sequence, 404 residues long: Tryptophan synthase beta chain (404 aa).

N6-(pyridoxal phosphate)lysine is present on Lys-98.

Belongs to the TrpB family. In terms of assembly, tetramer of two alpha and two beta chains. It depends on pyridoxal 5'-phosphate as a cofactor.

It carries out the reaction (1S,2R)-1-C-(indol-3-yl)glycerol 3-phosphate + L-serine = D-glyceraldehyde 3-phosphate + L-tryptophan + H2O. It participates in amino-acid biosynthesis; L-tryptophan biosynthesis; L-tryptophan from chorismate: step 5/5. In terms of biological role, the beta subunit is responsible for the synthesis of L-tryptophan from indole and L-serine. In Rhodopseudomonas palustris (strain HaA2), this protein is Tryptophan synthase beta chain.